Reading from the N-terminus, the 417-residue chain is Prostaglandin E2 receptor EP3 subtype (417 aa).

Topologically, residues 1 to 52 are extracellular; the sequence is MKATRDHASAPFCTRFNHSDPGIWAAERAVEAPNNLTLPPEPSEDCGSVSVA. Asn-17 and Asn-35 each carry an N-linked (GlcNAc...) asparagine glycan. A helical membrane pass occupies residues 53–77; sequence FSMTMMITGFVGNALAITLVSKSYR. The Cytoplasmic portion of the chain corresponds to 78 to 90; that stretch reads RREGKRKKSFLLC. A helical transmembrane segment spans residues 91-111; sequence IGWLALTDMVGQLLTSPVVIV. The Extracellular portion of the chain corresponds to 112–130; that stretch reads LYLSHQRWEQLDPSGRLCT. The helical transmembrane segment at 131–152 threads the bilayer; that stretch reads FFGLTMTVFGLSSLFIASAMAV. Residues 153–174 lie on the Cytoplasmic side of the membrane; sequence ERALATRAPHWYSSHMKTSVTR. Residues 175 to 196 form a helical membrane-spanning segment; it reads AVLLGVWLAVLAFALLPVLGVG. The Extracellular segment spans residues 197–226; it reads QYTIQWPGTWCFISTGPGGNGTNSRQNWGN. Asn-216 is a glycosylation site (N-linked (GlcNAc...) asparagine). A helical membrane pass occupies residues 227–252; the sequence is VFFASAFAILGLSALVVTFACNLATI. Residues 253 to 282 lie on the Cytoplasmic side of the membrane; sequence KALVSRCRAKATASQSSAQWGRITTETAIQ. The chain crosses the membrane as a helical span at residues 283–306; it reads LMGIMCVLSVCWSPLLIMMLKMIF. N-linked (GlcNAc...) asparagine glycosylation occurs at Asn-307. Topologically, residues 307–326 are extracellular; it reads NHTSVEHCKTYTENQDECNF. A helical membrane pass occupies residues 327-348; it reads FLIAVRLASLNQILDPWVYLLL. At 349-417 the chain is on the cytoplasmic side; it reads RKILLQKFCQ…HIYLHTLEHQ (69 aa).

It belongs to the G-protein coupled receptor 1 family. As to quaternary structure, interacts (via C-terminus) with MKLN1.

Its subcellular location is the cell membrane. Its function is as follows. Receptor for prostaglandin E2 (PGE2). The various isoforms have identical ligand binding properties but interact with different second messenger systems: isoform EP3A couples to G(i)/G(o) proteins; isoform EP3B and isoform EP3C couple to G(s), and isoform EP3D couples to G(i), G(s) and G(p). Required for normal development of fever in response to pyrinogens, including IL1B, prostaglandin E2 and bacterial lipopolysaccharide (LPS). Required for normal potentiation of platelet aggregation by prostaglandin E2, and thus plays a role in the regulation of blood coagulation. Required for increased HCO3(-) secretion in the duodenum in response to mucosal acidification, and thereby contributes to the protection of the mucosa against acid-induced ulceration. Not required for normal kidney function, normal urine volume and osmolality. In Bos taurus (Bovine), this protein is Prostaglandin E2 receptor EP3 subtype (PTGER3).